The following is a 109-amino-acid chain: Putative gametogenetin-binding protein 1 (109 aa).

The tract at residues 24–109 (KAFRSTDTVG…KGEMGNWPPE (86 aa)) is interaction with GGN.

Interacts with CCDC159. Interacts with GGN.

The protein resides in the cytoplasm. It localises to the membrane. Its subcellular location is the golgi apparatus. May be involved in spermatogenesis. This Homo sapiens (Human) protein is Putative gametogenetin-binding protein 1 (GGNBP1).